The chain runs to 1192 residues: Integrator complex subunit 2 (1192 aa).

A helical transmembrane segment spans residues 420–436 (FVSLSFCMLLAFSTLVS).

It belongs to the Integrator subunit 2 family. Component of the Integrator complex, composed of core subunits INTS1, INTS2, INTS3, INTS4, INTS5, INTS6, INTS7, INTS8, INTS9/RC74, INTS10, INTS11/CPSF3L, INTS12, INTS13, INTS14 and INTS15. The core complex associates with protein phosphatase 2A subunits PPP2CA and PPP2R1A, to form the Integrator-PP2A (INTAC) complex.

It localises to the nucleus. Its subcellular location is the nucleus membrane. The protein localises to the cytoplasm. Its function is as follows. Component of the integrator complex, a multiprotein complex that terminates RNA polymerase II (Pol II) transcription in the promoter-proximal region of genes. The integrator complex provides a quality checkpoint during transcription elongation by driving premature transcription termination of transcripts that are unfavorably configured for transcriptional elongation: the complex terminates transcription by (1) catalyzing dephosphorylation of the C-terminal domain (CTD) of Pol II subunit POLR2A/RPB1 and SUPT5H/SPT5, (2) degrading the exiting nascent RNA transcript via endonuclease activity and (3) promoting the release of Pol II from bound DNA. The integrator complex is also involved in terminating the synthesis of non-coding Pol II transcripts, such as enhancer RNAs (eRNAs), small nuclear RNAs (snRNAs), telomerase RNAs and long non-coding RNAs (lncRNAs). The sequence is that of Integrator complex subunit 2 (INTS2) from Gallus gallus (Chicken).